A 414-amino-acid polypeptide reads, in one-letter code: Probable cytochrome P450 127A1 (414 aa).

Residue Cys-364 participates in heme binding.

The protein belongs to the cytochrome P450 family. Heme serves as cofactor.

Its function is as follows. Cytochromes P450 are a group of heme-thiolate monooxygenases. They oxidize a variety of structurally unrelated compounds, including steroids, fatty acids, and xenobiotics. This is Probable cytochrome P450 127A1 (cyp127A1) from Sinorhizobium fredii (strain NBRC 101917 / NGR234).